Reading from the N-terminus, the 1079-residue chain is Electrogenic sodium bicarbonate cotransporter 1 (1079 aa).

The interval 1–62 (MEDEAALDRG…EKKEKERVSE (62 aa)) is required for interaction with AHCYL1. The Cytoplasmic segment spans residues 1-466 (MEDEAALDRG…FASDFYDALN (466 aa)). Y30 bears the Phosphotyrosine mark. Residues 39–52 (YRRRRRHKRKAGHR) are compositionally biased toward basic residues. The segment at 39–78 (YRRRRRHKRKAGHREKKEKERVSENYSDKSDVENADESSS) is disordered. Over residues 53–70 (EKKEKERVSENYSDKSDV) the composition is skewed to basic and acidic residues. Residues S61, S65, S68, S223, S232, S233, and S245 each carry the phosphoserine modification. Residues 238-265 (FTSPENGSPAMTHRNLTSSSLNDISDKP) are disordered. Phosphothreonine is present on residues T249 and T254. Positions 251 to 260 (RNLTSSSLND) are enriched in polar residues. Phosphoserine occurs at positions 256, 257, and 262. The chain crosses the membrane as a helical span at residues 467–491 (IQALSAILFIYLATVTNAITFGGLL). The Extracellular portion of the chain corresponds to 492 to 501 (GDATDNMQGV). A helical transmembrane segment spans residues 502–520 (LESFLGTAVSGAVFCLFAG). Position 521 (Q521) is a topological domain, cytoplasmic. Residues 522 to 542 (PLTILSSTGPVLVFERLLFNF) traverse the membrane as a discontinuously helical segment. The Extracellular portion of the chain corresponds to 543-550 (SKDHNFDY). A helical transmembrane segment spans residues 551–571 (LEFRLWIGLWSAFLCLILVAT). Residues 572–585 (DASFLVQYFTRFTE) lie on the Cytoplasmic side of the membrane. A helical transmembrane segment spans residues 586–609 (EGFSSLISFIFIYDAFKKMIKLAD). At 610–692 (YYPINSNFKV…GNNCDFVPDI (83 aa)) the chain is on the extracellular side. Residues 693 to 710 (TLMSFILFLGTYTSSMAL) form a helical membrane-spanning segment. Residues 711-725 (KKFKTSRYFPTTARK) are Cytoplasmic-facing. A helical transmembrane segment spans residues 726–745 (LISDFAIILSILIFCVIDAL). Over 746 to 779 (VGVDTPKLIVPSEFKPTSPNRGWFVPPFGGNPWW) the chain is Extracellular. Residues 748-779 (VDTPKLIVPSEFKPTSPNRGWFVPPFGGNPWW) form an interaction with CA4 region. A helical transmembrane segment spans residues 780-807 (VYLAAAIPALLVTILIFMDQQITAVIVN). Over 808 to 819 (RKEHKLKKGAGY) the chain is Cytoplasmic. Residues 820–836 (HLDLFWVAILMVVCSFM) traverse the membrane as a helical segment. Residue A837 is a topological domain, extracellular. The discontinuously helical transmembrane segment at 838–855 (LPWYVAATVISIAHIDSL) threads the bilayer. Over 856-877 (KMETETSAPGEQPKFLGVREQR) the chain is Cytoplasmic. Residues 878 to 894 (VTGTLVFILTGLSVFMA) traverse the membrane as a helical segment. The Extracellular portion of the chain corresponds to 895 to 901 (PILKFIP). A helical membrane pass occupies residues 902 to 918 (MPVLYGVFLYMGVASLN). The Cytoplasmic portion of the chain corresponds to 919 to 960 (GVQFMDRLKLLLMPLKHQPDFIYLRHVPLRRVHLFTFLQVLC). Residues 961–986 (LALLWILKSTVAAIIFPVMILALVAV) constitute an intramembrane region (discontinuously helical). The Cytoplasmic portion of the chain corresponds to 987-1079 (RKGMDYLFSQ…PTFLERHTSC (93 aa)). The segment at 1002–1004 (LDD) is CA2-binding. The segment at 1012-1079 (KKKEDEKKKK…PTFLERHTSC (68 aa)) is disordered. Phosphoserine; by PKA is present on S1026. At S1029 the chain carries Phosphoserine. The tract at residues 1030–1033 (DSDD) is CA2-binding. Phosphoserine is present on residues S1034 and S1044. The tract at residues 1057-1059 (FLS) is required for basolateral targeting. Residues 1062-1079 (KPSDRERSPTFLERHTSC) are compositionally biased toward basic and acidic residues. The residue at position 1069 (S1069) is a Phosphoserine.

The protein belongs to the anion exchanger (TC 2.A.31) family. Homodimer. Interacts with CA2/carbonic anhydrase 2 and CA4/carbonic anhydrase 4 which may regulate transporter activity. Isoform 1 but not isoform 2 interacts with AHCYL1 (via PEST domain when phosphorylated); the interaction increases SLC4A4 isoform 1 activity. Interacts with AHCYL2. In terms of processing, phosphorylation of Ser-1026 by PKA increases the binding of CA2 and changes the Na(+):HCO3(-) stoichiometry of the transporter from 3:1 to 2:1. Phosphorylated in presence of STK39 and dephosphorylated in presence of PP1 phosphatase; phosphorylation seems to inhibit SLC4A4 activity. Post-translationally, N-glycosylated. May not be necessary for the transporter basic functions. In terms of tissue distribution, expressed in vas deferens epithelia (at protein level).

It is found in the basolateral cell membrane. It localises to the cell membrane. It catalyses the reaction 2 hydrogencarbonate(out) + Na(+)(out) = 2 hydrogencarbonate(in) + Na(+)(in). The enzyme catalyses 3 hydrogencarbonate(out) + Na(+)(out) = 3 hydrogencarbonate(in) + Na(+)(in). Electrogenic sodium/bicarbonate cotransporter with a Na(+):HCO3(-) stoichiometry varying from 1:2 to 1:3. May regulate bicarbonate influx/efflux at the basolateral membrane of cells and regulate intracellular pH. This Sus scrofa (Pig) protein is Electrogenic sodium bicarbonate cotransporter 1 (SLC4A4).